A 532-amino-acid chain; its full sequence is Probable bifunctional tRNA threonylcarbamoyladenosine biosynthesis protein (532 aa).

A kae1 region spans residues 1-323 (MRVLGVEGTA…FRPDEVSVTW (323 aa)). Fe cation-binding residues include His107 and His111. Residues 128–132 (NASGA), Asp160, Gly173, Glu177, and Asn256 contribute to the L-threonylcarbamoyladenylate site. A Fe cation-binding site is contributed by Asp284. The 204-residue stretch at 329–532 (PARDPGADAV…GRYQDDPETA (204 aa)) folds into the Protein kinase domain. ATP-binding positions include 338 to 346 (VRQGAEATV) and Lys355. Asp444 acts as the Proton acceptor; for kinase activity in catalysis.

In the N-terminal section; belongs to the KAE1 / TsaD family. The protein in the C-terminal section; belongs to the protein kinase superfamily. Tyr protein kinase family. BUD32 subfamily. As to quaternary structure, component of the KEOPS complex that consists of Kae1, Bud32, Cgi121 and Pcc1; the whole complex dimerizes. It depends on Fe(2+) as a cofactor.

It localises to the cytoplasm. The enzyme catalyses L-seryl-[protein] + ATP = O-phospho-L-seryl-[protein] + ADP + H(+). The catalysed reaction is L-threonyl-[protein] + ATP = O-phospho-L-threonyl-[protein] + ADP + H(+). It carries out the reaction L-threonylcarbamoyladenylate + adenosine(37) in tRNA = N(6)-L-threonylcarbamoyladenosine(37) in tRNA + AMP + H(+). Required for the formation of a threonylcarbamoyl group on adenosine at position 37 (t(6)A37) in tRNAs that read codons beginning with adenine. Is a component of the KEOPS complex that is probably involved in the transfer of the threonylcarbamoyl moiety of threonylcarbamoyl-AMP (TC-AMP) to the N6 group of A37. The Kae1 domain likely plays a direct catalytic role in this reaction. The Bud32 domain probably displays kinase activity that regulates Kae1 function. The protein is Probable bifunctional tRNA threonylcarbamoyladenosine biosynthesis protein of Halobacterium salinarum (strain ATCC 700922 / JCM 11081 / NRC-1) (Halobacterium halobium).